Here is a 459-residue protein sequence, read N- to C-terminus: Peptidyl-prolyl cis-trans isomerase FKBP4 (459 aa).

The residue at position 1 (methionine 1) is an N-acetylmethionine; in peptidyl-prolyl cis-trans isomerase FKBP4; alternate. The segment at 1-22 is disordered; that stretch reads MTAEETKAAESGAQSAPLRLEG. At threonine 2 the chain carries N-acetylthreonine; in peptidyl-prolyl cis-trans isomerase FKBP4, N-terminally processed; partial. The 89-residue stretch at 50-138 folds into the PPIase FKBP-type 1 domain; it reads GDRVFVHYTG…VFEVELFEFK (89 aa). Phosphothreonine is present on threonine 143. One can recognise a PPIase FKBP-type 2 domain in the interval 167–253; sequence GALVEVALEG…KYEIHLKSFE (87 aa). At tyrosine 220 the chain carries Phosphotyrosine. Residues 267–400 form an interaction with tubulin region; that stretch reads LEQSTIVKER…AQLVVCQQRI (134 aa). 3 TPR repeats span residues 270–303, 319–352, and 354–386; these read STIVKERGTVYFKEGKYKQAVLQYKKIVSWLEYE, LASHLNLAMCHLKLQAFSAAIENCNKALELDSNN, and KGLFRRGEAHLAVNDFDLARADFQKVLQLYPSN. Lysine 282 carries the post-translational modification N6-acetyllysine. An Omega-N-methylarginine modification is found at arginine 373. The segment at 423–459 is disordered; it reads TKAKATVAAGDQPADAEMRDEPKNDVAGGQPQVEAEA.

As to quaternary structure, homodimer. Interacts with GLMN. Associates with HSP90AA1 and HSP70 in steroid hormone receptor complexes. Also interacts with peroxisomal phytanoyl-CoA alpha-hydroxylase (PHYH). Interacts with NR3C1 and dynein. Interacts with HSF1 in the HSP90 complex. Associates with tubulin. Interacts with MAPT/TAU. Interacts (via TPR domain) with S100A1, S100A2 and S100A6; the interaction is Ca(2+) dependent. Interaction with S100A1 and S100A2 (but not with S100A6) leads to inhibition of FKBP4-HSP90 interaction. Interacts with dynein; causes partially NR3C1 transport to the nucleus.

The protein localises to the cytoplasm. It is found in the cytosol. It localises to the mitochondrion. The protein resides in the nucleus. Its subcellular location is the cytoskeleton. The enzyme catalyses [protein]-peptidylproline (omega=180) = [protein]-peptidylproline (omega=0). With respect to regulation, inhibited by FK506. Its function is as follows. Immunophilin protein with PPIase and co-chaperone activities. Component of unligated steroid receptors heterocomplexes through interaction with heat-shock protein 90 (HSP90). May play a role in the intracellular trafficking of heterooligomeric forms of steroid hormone receptors between cytoplasm and nuclear compartments. The isomerase activity controls neuronal growth cones via regulation of TRPC1 channel opening. Also acts as a regulator of microtubule dynamics by inhibiting MAPT/TAU ability to promote microtubule assembly. May have a protective role against oxidative stress in mitochondria. The chain is Peptidyl-prolyl cis-trans isomerase FKBP4 (FKBP4) from Bos taurus (Bovine).